A 407-amino-acid polypeptide reads, in one-letter code: uncharacterized protein (407 aa).

Disordered regions lie at residues 73 to 93 (SPHS…VHGG) and 116 to 202 (SGSI…IKPS). 5 tandem repeats follow at residues 112-116 (GSIRS), 117-121 (GSIRS), 122-126 (GSIRN), 127-131 (GSIRS), and 132-136 (GSVRD). Residues 112-136 (GSIRSGSIRSGSIRNGSIRSGSVRD) are 5 X 5 AA tandem repeats of G-[S]-[IV]-R-[DNS]. A compositionally biased stretch (low complexity) spans 116 to 132 (SGSIRSGSIRNGSIRSG). Basic and acidic residues predominate over residues 187-202 (NHYAESEYSEKSIKPS).

Belongs to the asfivirus B407L family.

This is an uncharacterized protein from Ornithodoros (relapsing fever ticks).